We begin with the raw amino-acid sequence, 993 residues long: Signal peptide, CUB and EGF-like domain-containing protein 3 (993 aa).

An N-terminal signal peptide occupies residues 1–20 (MGSGRVPGLCLLLLLVHARA). Residues 29-69 (DVDECVEGTDNCHIDAICQNTPRSYKCICKSGYTGDGKHCK) form the EGF-like 1; calcium-binding domain. 26 cysteine pairs are disulfide-bonded: C33–C46, C40–C55, C57–C68, C74–C86, C82–C95, C97–C110, C116–C127, C123–C136, C161–C172, C168–C182, C184–C197, C201–C212, C208–C221, C223–C236, C240–C251, C247–C260, C262–C275, C281–C292, C288–C301, C303–C316, C322–C332, C328–C341, C343–C355, C361–C372, C368–C381, and C383–C397. Positions 70–111 (DVDECEREDNAGCVHDCVNIPGNYRCTCYDGFHLAHDGHNCL) constitute an EGF-like 2; calcium-binding domain. In terms of domain architecture, EGF-like 3; calcium-binding spans 112–148 (DVDECAEGNGGCQQSCVNMMGSYECHCRDGFFLSDNQ). EGF-like domains follow at residues 157-198 (EGMN…RDCK), 199-237 (LTCN…KTCI), and 238-276 (ETCA…KTCK). Positions 277–317 (DIDECRLNNGGCDHICRNTVGSFECSCKKGYKLLINERSCQ) constitute an EGF-like 7; calcium-binding domain. An EGF-like 8; calcium-binding domain is found at 318–356 (DIDECSFDRTCDHMCVNTPGSFQCLCHRGYLLYGVTHCG). The region spanning 357-398 (DVDECSINKGGCRFGCINTPGSYQCTCPAGQGRLHWNGKDCT) is the EGF-like 9; calcium-binding domain. N-linked (GlcNAc...) asparagine glycans are attached at residues N417, N464, N685, N756, and N785. Cystine bridges form between C804–C830 and C857–C878. The region spanning 804–916 (CGGELGEFTG…RGFQIPYVTY (113 aa)) is the CUB domain.

In terms of assembly, forms homooligomers. Forms heterooligomers with SCUBE1 and SCUBE2. Interacts with TGFBR2 through the CUB domain; this interaction does not affect TGFB1-binding to TGFBR2. Interacts with BMP2, BMP4 and BMP7; the interaction is mediated by the CUB domain. Interacts with BMPR1A, BMPR1B and BMPR2; the interaction with BMPR1A and BMPR1B is BMP2- and BMP4-dependent. N-glycosylated. In terms of processing, proteolytic cleavage produces a CUB-containing C-terminal fragment that retains the ability to bind to TGFBR2. This reaction is catalyzed in vitro by MMP2 and, to a lesser extent, by MMP9. As to expression, highly expressed in femur and humerus with little or no expression in non-bone tissues.

The protein resides in the secreted. The protein localises to the cell surface. Is a positive regulator of the BMP signaling pathway, required for proper chondrogenesis, osteogenesis and skeletal development. It acts as a coreceptor for BMP ligands, particularly BMP2 and BMP4, facilitating their interactions with BMP type I receptors. It is required for ligand-induced recruitment of BMP receptors to lipid rafts. Binds to TGFBR2 and activates TGFB signaling. This is Signal peptide, CUB and EGF-like domain-containing protein 3 from Mus musculus (Mouse).